The following is a 322-amino-acid chain: Crystallin J1A (322 aa).

This sequence belongs to the ADP-ribosylglycohydrolase family. J1 crystallin subfamily. In terms of tissue distribution, expressed in the rhopalia. Present in both the large and small eyes.

This is Crystallin J1A from Tripedalia cystophora (Jellyfish).